The sequence spans 362 residues: Dihydroorotate dehydrogenase (quinone) (362 aa).

FMN is bound by residues 62–66 (AGYDK) and threonine 86. Substrate is bound at residue lysine 66. 111 to 115 (NRLGF) is a substrate binding site. 2 residues coordinate FMN: asparagine 139 and asparagine 170. Residue asparagine 170 participates in substrate binding. Serine 173 (nucleophile) is an active-site residue. Position 175 (asparagine 175) interacts with substrate. FMN contacts are provided by lysine 215 and serine 243. 244 to 245 (NT) lines the substrate pocket. Residues glycine 266, glycine 295, and 316–317 (YS) contribute to the FMN site.

It belongs to the dihydroorotate dehydrogenase family. Type 2 subfamily. As to quaternary structure, monomer. Requires FMN as cofactor.

It is found in the cell membrane. It catalyses the reaction (S)-dihydroorotate + a quinone = orotate + a quinol. Its pathway is pyrimidine metabolism; UMP biosynthesis via de novo pathway; orotate from (S)-dihydroorotate (quinone route): step 1/1. Catalyzes the conversion of dihydroorotate to orotate with quinone as electron acceptor. This chain is Dihydroorotate dehydrogenase (quinone), found in Sinorhizobium fredii (strain NBRC 101917 / NGR234).